A 598-amino-acid chain; its full sequence is Integrator complex subunit 11 (598 aa).

Zn(2+)-binding residues include histidine 68, histidine 70, aspartate 72, histidine 73, histidine 157, and aspartate 178. The short motif at 68–73 (HFHLDH) is the HXHXDH motif element. The active site involves glutamate 203. Histidine 414 contacts Zn(2+). A Nuclear localization signal motif is present at residues 470–480 (PLPDAKRPRTM).

Belongs to the metallo-beta-lactamase superfamily. RNA-metabolizing metallo-beta-lactamase-like family. INTS11 subfamily. Component of the Integrator complex, composed of core subunits INTS1, INTS2, INTS3, INTS4, INTS5, INTS6, INTS7, INTS8, INTS9/RC74, INTS10, INTS11/CPSF3L, INTS12, INTS13, INTS14 and INTS15. The core complex associates with protein phosphatase 2A subunits PPP2CA and PPP2R1A, to form the Integrator-PP2A (INTAC) complex. INTS11 is part of the RNA endonuclease subcomplex, composed of INTS4, INTS9, INTS11 and inositol hexakisphosphate (InsP6). Zn(2+) is required as a cofactor.

It localises to the nucleus. Its subcellular location is the cytoplasm. Its function is as follows. RNA endonuclease component of the integrator complex, a multiprotein complex that terminates RNA polymerase II (Pol II) transcription in the promoter-proximal region of genes. The integrator complex provides a quality checkpoint during transcription elongation by driving premature transcription termination of transcripts that are unfavorably configured for transcriptional elongation: the complex terminates transcription by (1) catalyzing dephosphorylation of the C-terminal domain (CTD) of Pol II subunit POLR2A/RPB1 and SUPT5H/SPT5, (2) degrading the exiting nascent RNA transcript via endonuclease activity and (3) promoting the release of Pol II from bound DNA. The integrator complex is also involved in terminating the synthesis of non-coding Pol II transcripts, such as enhancer RNAs (eRNAs), small nuclear RNAs (snRNAs), telomerase RNAs and long non-coding RNAs (lncRNAs). Within the integrator complex, INTS11 constitutes the RNA endonuclease subunit that degrades exiting nascent RNA transcripts. This chain is Integrator complex subunit 11 (cpsf3l), found in Danio rerio (Zebrafish).